Here is a 480-residue protein sequence, read N- to C-terminus: Radical SAM Nalpha-GlyT isomerase (480 aa).

3 residues coordinate iron-sulfur cluster: C125, C129, and C132. The segment at 457-480 (KIVEPTPPEEDGGERKIIPITQID) is disordered.

The catalysed reaction is 5-N(alpha)-glycyl-dTMP in DNA + AH2 + S-adenosyl-L-methionine = 5-C(alpha)-glycyl-dTMP in DNA + 5'-deoxyadenosine + L-methionine + A + H(+). In terms of biological role, isomerizes 5-N-alpha-glycinylthymidine (Nalpha-GlyT) into 5-Calpha-glycinylthymidine (Calpha-GlyT) as a step in the pathway leading to thymidine hypermodifications in the viral genome. As a final result of the pathway of hypermodification, 5-aminoethyl-2'-deoxyuridine (5-NedU) substitutes for about 30% of thymidines in the viral DNA. These modifications probably prevent degradation of viral genome by the host restriction-modification antiviral defense system. The protein is Radical SAM Nalpha-GlyT isomerase of Pseudomonas phage M6.